The sequence spans 201 residues: 3-isopropylmalate dehydratase small subunit (201 aa).

Belongs to the LeuD family. LeuD type 1 subfamily. Heterodimer of LeuC and LeuD.

The catalysed reaction is (2R,3S)-3-isopropylmalate = (2S)-2-isopropylmalate. The protein operates within amino-acid biosynthesis; L-leucine biosynthesis; L-leucine from 3-methyl-2-oxobutanoate: step 2/4. In terms of biological role, catalyzes the isomerization between 2-isopropylmalate and 3-isopropylmalate, via the formation of 2-isopropylmaleate. This is 3-isopropylmalate dehydratase small subunit from Methylorubrum populi (strain ATCC BAA-705 / NCIMB 13946 / BJ001) (Methylobacterium populi).